We begin with the raw amino-acid sequence, 133 residues long: ATP synthase epsilon chain (133 aa).

Belongs to the ATPase epsilon chain family. As to quaternary structure, F-type ATPases have 2 components, CF(1) - the catalytic core - and CF(0) - the membrane proton channel. CF(1) has five subunits: alpha(3), beta(3), gamma(1), delta(1), epsilon(1). CF(0) has three main subunits: a, b and c.

It localises to the cell membrane. In terms of biological role, produces ATP from ADP in the presence of a proton gradient across the membrane. In Clostridium perfringens (strain SM101 / Type A), this protein is ATP synthase epsilon chain.